The following is a 144-amino-acid chain: Large ribosomal subunit protein uL15 (144 aa).

The segment at 1-48 (MQLNNLKPAAGSKHAKRRVGRGIGSGLGKTAGRGHKGQKSRSGGFHKV) is disordered. The span at 21 to 31 (RGIGSGLGKTA) shows a compositional bias: gly residues.

The protein belongs to the universal ribosomal protein uL15 family. In terms of assembly, part of the 50S ribosomal subunit.

Functionally, binds to the 23S rRNA. The chain is Large ribosomal subunit protein uL15 from Cupriavidus pinatubonensis (strain JMP 134 / LMG 1197) (Cupriavidus necator (strain JMP 134)).